The sequence spans 434 residues: Pectate lyase (434 aa).

The signal sequence occupies residues 1–22 (MKAAQFFLYSLLFFASAALSSA). 2 N-linked (GlcNAc...) asparagine glycosylation sites follow: asparagine 68 and asparagine 97. Ca(2+) is bound by residues aspartate 232, aspartate 256, and aspartate 260. Arginine 312 is an active-site residue.

The protein belongs to the polysaccharide lyase 1 family. Ca(2+) is required as a cofactor.

It carries out the reaction Eliminative cleavage of (1-&gt;4)-alpha-D-galacturonan to give oligosaccharides with 4-deoxy-alpha-D-galact-4-enuronosyl groups at their non-reducing ends.. Its pathway is glycan metabolism; pectin degradation; 2-dehydro-3-deoxy-D-gluconate from pectin: step 2/5. The sequence is that of Pectate lyase from Lilium longiflorum (Trumpet lily).